The following is a 356-amino-acid chain: Thrombomodulin (356 aa).

Over 1 to 296 (RGARGETEGR…SPAPAGPLHS (296 aa)) the chain is Extracellular. 2 EGF-like domains span residues 17 to 57 (GAWA…RSCG) and 60 to 98 (AEHP…HRCE). Disulfide bonds link C21/C32, C28/C41, C43/C56, C64/C72, C68/C82, C84/C97, C103/C114, C110/C123, C125/C136, C143/C152, C148/C162, C164/C178, C182/C191, C187/C199, C201/C213, C219/C228, C224/C237, and C239/C253. The region spanning 99 to 137 (DVDDCAQLPSPCPQRCVNTEGGFQCHCDTGYELVDGECV) is the EGF-like 3; calcium-binding domain. EGF-like domains are found at residues 139–179 (PVDP…HKCQ) and 178–214 (CQMF…STCT). An EGF-like 6; calcium-binding domain is found at 215–254 (DINECDTNICPGQCHNLPGTYECICGPDSALSGQIGIDCD). Positions 255–290 (PTQVNEERGTPEDYGGSGEPPVSPTPGATARPSPAP) are disordered. O-linked (Xyl...) (chondroitin sulfate) serine glycosylation occurs at S271. Residues 297–320 (GVLVGISIASLSLVVALLALLCHL) traverse the membrane as a helical segment. The Cytoplasmic segment spans residues 321 to 356 (RKKQGASRGELEYKCGVPAKELMLQQVKTERTPQKL).

Interacts with ITGAL, ITGAM and ITGB2. Interacts with thrombin/F2; this interaction switches the specificity of thrombin from a procoagulant to an anticoagulant and antifibrinolytic protease. Interacts with ANGP1 and ANGP2; these interactions significantly inhibit the generation of activated PC and TAFIa/CPB2 by the thrombin/thrombomodulin complex. Interacts with PF4; this interaction enhances generation of activated protein C. Interacts with HMGB1; this interaction inhibits HMGB1 inflammatory activity. Endothelial cells are unique in synthesizing thrombomodulin.

Its subcellular location is the membrane. Its function is as follows. Endothelial cell receptor that plays a critical role in regulating several physiological processes including hemostasis, coagulation, fibrinolysis, inflammation, and angiogenesis. Acts as a cofactor for thrombin activation of protein C/PROC on the surface of vascular endothelial cells leading to initiation of the activated protein C anticoagulant pathway. Also accelerates the activation of the plasma carboxypeptidase B2/CPB2, which catalyzes removal of C-terminal basic amino acids from its substrates including kinins or anaphylatoxins leading to fibrinolysis inhibition. Plays critical protective roles in changing the cleavage specificity of protease-activated receptor 1/PAR1, inhibiting endothelial cell permeability and inflammation. Suppresses inflammation distinctly from its anticoagulant cofactor activity by sequestering HMGB1 thereby preventing it from engaging cellular receptors such as RAGE and contributing to the inflammatory response. The polypeptide is Thrombomodulin (THBD) (Bos taurus (Bovine)).